The primary structure comprises 276 residues: Urease accessory protein UreD (276 aa).

It belongs to the UreD family. As to quaternary structure, ureD, UreF and UreG form a complex that acts as a GTP-hydrolysis-dependent molecular chaperone, activating the urease apoprotein by helping to assemble the nickel containing metallocenter of UreC. The UreE protein probably delivers the nickel.

The protein resides in the cytoplasm. Required for maturation of urease via the functional incorporation of the urease nickel metallocenter. This chain is Urease accessory protein UreD, found in Polaromonas sp. (strain JS666 / ATCC BAA-500).